The chain runs to 328 residues: DNA-directed RNA polymerase subunit alpha (328 aa).

Residues 1-234 (MQGSVTEFLK…EQLDAFVDLR (234 aa)) are alpha N-terminal domain (alpha-NTD). An alpha C-terminal domain (alpha-CTD) region spans residues 248–328 (FDPILLRPVD…NWPPASIAED (81 aa)).

Belongs to the RNA polymerase alpha chain family. In terms of assembly, homodimer. The RNAP catalytic core consists of 2 alpha, 1 beta, 1 beta' and 1 omega subunit. When a sigma factor is associated with the core the holoenzyme is formed, which can initiate transcription.

The catalysed reaction is RNA(n) + a ribonucleoside 5'-triphosphate = RNA(n+1) + diphosphate. Its function is as follows. DNA-dependent RNA polymerase catalyzes the transcription of DNA into RNA using the four ribonucleoside triphosphates as substrates. The chain is DNA-directed RNA polymerase subunit alpha from Haemophilus influenzae (strain PittEE).